The primary structure comprises 355 residues: MASITLRRRDAVLLTAMLATETGNVAMNTLFKAATSKGLNSYTFLIYSYLIGSIVLLPSHIFSYRSRSLPSLSLSILCKIGVLGLLGSTYLITGFIGIEYSNPTLASAISNINPAITFILAIIFRMEKASFKEKSSVAKMVGTIVSLVGALVVVLYHGPRVFTPSSPPFPQLRQLLLPLSSSNSDWIIGGCLLAIKDTLVPVAFILQAHIMKLYPAPFTVSFFYFLIASILTSLIGIVAEKNNPSIWIIHFDITLVCIVVGGIFNPGYYAIHLWAVRNKGPVYLAIFRPLSILIAVIMGAIFLGDSFYLGSLVGGILISLGFYTVMWGKAKEGKTQFLSLSEETPLLDENIDDRI.

The next 10 membrane-spanning stretches (helical) occupy residues 11-31, 42-62, 80-100, 104-124, 136-156, 186-206, 218-238, 244-264, 290-310, and 311-331; these read AVLL…NTLF, YTFL…SHIF, IGVL…GIEY, TLAS…AIIF, SVAK…VVLY, WIIG…AFIL, FTVS…IGIV, PSIW…GGIF, LSIL…FYLG, and SLVG…GKAK. An EamA domain is found at 29 to 154; sequence TLFKAATSKG…VSLVGALVVV (126 aa).

This sequence belongs to the drug/metabolite transporter (DMT) superfamily. Plant drug/metabolite exporter (P-DME) (TC 2.A.7.4) family.

The protein resides in the membrane. This chain is WAT1-related protein At3g28130, found in Arabidopsis thaliana (Mouse-ear cress).